A 426-amino-acid chain; its full sequence is Enolase (426 aa).

Glutamine 163 contacts (2R)-2-phosphoglycerate. Glutamate 205 serves as the catalytic Proton donor. Residues aspartate 242, glutamate 285, and aspartate 312 each contribute to the Mg(2+) site. (2R)-2-phosphoglycerate contacts are provided by lysine 337, arginine 366, serine 367, and lysine 388. The Proton acceptor role is filled by lysine 337.

This sequence belongs to the enolase family. Requires Mg(2+) as cofactor.

It is found in the cytoplasm. The protein resides in the secreted. It localises to the cell surface. It catalyses the reaction (2R)-2-phosphoglycerate = phosphoenolpyruvate + H2O. It functions in the pathway carbohydrate degradation; glycolysis; pyruvate from D-glyceraldehyde 3-phosphate: step 4/5. Its function is as follows. Catalyzes the reversible conversion of 2-phosphoglycerate (2-PG) into phosphoenolpyruvate (PEP). It is essential for the degradation of carbohydrates via glycolysis. The sequence is that of Enolase from Phenylobacterium zucineum (strain HLK1).